The sequence spans 205 residues: Probable thymidylate kinase (205 aa).

An ATP-binding site is contributed by 10–17; it reads GIDGSGKT.

Belongs to the thymidylate kinase family.

It catalyses the reaction dTMP + ATP = dTDP + ADP. This Pyrococcus abyssi (strain GE5 / Orsay) protein is Probable thymidylate kinase (tmk).